The sequence spans 449 residues: Doublesex- and mab-3-related transcription factor A2 (449 aa).

Residues 57–104 constitute a DNA-binding region (DM); that stretch reads CARCRNHGVVSALKGHKRYCRWKDCMCAKCTLIAERQRVMAAQVALRR. The disordered stretch occupies residues 166–259; that stretch reads KNQLSGSATP…PSPSSAASRH (94 aa). A compositionally biased stretch (polar residues) spans 167–177; it reads NQLSGSATPQP. Residues 230-240 show a composition bias toward low complexity; that stretch reads GSVSSIGSDSG. Residues 260–295 form the DMA domain; that stretch reads MNAIDILTRVFPSHKRSVLELVLQGCGKDVVQAIEQ.

Belongs to the DMRT family.

Its subcellular location is the nucleus. Functionally, may be involved in sexual development. This is Doublesex- and mab-3-related transcription factor A2 (dmrta2) from Oreochromis niloticus (Nile tilapia).